Consider the following 341-residue polypeptide: Phosphate acyltransferase (341 aa).

This sequence belongs to the PlsX family. In terms of assembly, homodimer. Probably interacts with PlsY.

It localises to the cytoplasm. The catalysed reaction is a fatty acyl-[ACP] + phosphate = an acyl phosphate + holo-[ACP]. It participates in lipid metabolism; phospholipid metabolism. Functionally, catalyzes the reversible formation of acyl-phosphate (acyl-PO(4)) from acyl-[acyl-carrier-protein] (acyl-ACP). This enzyme utilizes acyl-ACP as fatty acyl donor, but not acyl-CoA. This chain is Phosphate acyltransferase, found in Aliivibrio salmonicida (strain LFI1238) (Vibrio salmonicida (strain LFI1238)).